Reading from the N-terminus, the 276-residue chain is Undecaprenyl-diphosphatase (276 aa).

7 consecutive transmembrane segments (helical) span residues 46–66 (AGAS…LIYF), 94–114 (LMGI…VKAI), 122–142 (LWVV…AERV), 152–172 (LGIG…IPGV), 196–216 (SFLL…IAEF), 226–246 (LGTL…IRFL), and 253–273 (VFIV…ALGF).

This sequence belongs to the UppP family.

It is found in the cell inner membrane. The catalysed reaction is di-trans,octa-cis-undecaprenyl diphosphate + H2O = di-trans,octa-cis-undecaprenyl phosphate + phosphate + H(+). Functionally, catalyzes the dephosphorylation of undecaprenyl diphosphate (UPP). Confers resistance to bacitracin. This Synechococcus sp. (strain JA-3-3Ab) (Cyanobacteria bacterium Yellowstone A-Prime) protein is Undecaprenyl-diphosphatase.